Consider the following 422-residue polypeptide: Carboxypeptidase B2 (422 aa).

The first 21 residues, 1-21 (MKLYGLGVLVAIILYEKHGLA), serve as a signal peptide directing secretion. Positions 22–113 (FQSGHVLSAL…QTSNDTVSPR (92 aa)) are cleaved as a propeptide — activation peptide. 4 N-linked (GlcNAc...) asparagine glycosylation sites follow: Asn43, Asn72, Asn84, and Asn107. The region spanning 121–418 (QYHSLNEIYS…AAVSKIAWHV (298 aa)) is the Peptidase M14 domain. A disulfide bond links Cys177 and Cys190. The Zn(2+) site is built by His180 and Glu183. Substrate-binding positions include 180–183 (HARE) and Arg238. Asn240 carries an N-linked (GlcNAc...) asparagine glycan. 2 disulfide bridges follow: Cys249/Cys273 and Cys264/Cys278. Position 255-256 (255-256 (NR)) interacts with substrate. A Zn(2+)-binding site is contributed by His309. Residue 310–311 (SY) coordinates substrate. Asn322 is a glycosylation site (N-linked (GlcNAc...) asparagine). Position 362 (Tyr362) interacts with substrate. The active-site Proton donor/acceptor is the Glu384.

The protein belongs to the peptidase M14 family. Requires Zn(2+) as cofactor. In terms of tissue distribution, plasma; synthesized in the liver.

It localises to the secreted. The catalysed reaction is Release of C-terminal Arg and Lys from a polypeptide.. With respect to regulation, TAFI/CPB2 is unique among carboxypeptidases in that it spontaneously inactivates with a short half-life, a property that is crucial for its role in controlling blood clot lysis. The zymogen is stabilized by interactions with the activation peptide. Release of the activation peptide increases a dynamic flap mobility and in time this leads to conformational changes that disrupt the catalytic site and expose a cryptic thrombin-cleavage site present at Arg-323. Functionally, cleaves C-terminal arginine or lysine residues from biologically active peptides such as kinins or anaphylatoxins in the circulation thereby regulating their activities. Down-regulates fibrinolysis by removing C-terminal lysine residues from fibrin that has already been partially degraded by plasmin. The chain is Carboxypeptidase B2 (Cpb2) from Rattus norvegicus (Rat).